Consider the following 122-residue polypeptide: LYR motif-containing protein 1 (122 aa).

It belongs to the complex I LYR family. High levels in adipose tissue.

Its subcellular location is the nucleus. Functionally, may promote cell proliferation and inhibition of apoptosis of preadipocytes. The sequence is that of LYR motif-containing protein 1 (LYRM1) from Homo sapiens (Human).